Reading from the N-terminus, the 245-residue chain is Thiopurine S-methyltransferase (245 aa).

Ser14 is subject to Phosphoserine. 29–40 contacts S-adenosyl-L-methionine; sequence WQDKWVNGKTAF. Phe40 lines the substrate pocket. Lys58 carries the N6-acetyllysine modification. S-adenosyl-L-methionine-binding positions include Leu69, Glu90, 134 to 135, and Arg152; that span reads SI.

Belongs to the class I-like SAM-binding methyltransferase superfamily. TPMT family. Monomer.

The protein localises to the cytoplasm. The catalysed reaction is S-adenosyl-L-methionine + a thiopurine = S-adenosyl-L-homocysteine + a thiopurine S-methylether.. The chain is Thiopurine S-methyltransferase (TPMT) from Chlorocebus aethiops (Green monkey).